The primary structure comprises 454 residues: Alkaline extracellular protease (454 aa).

A signal peptide spans 1–15; the sequence is MKLATAFTILTAVLA. Positions 16-157 are excised as a propeptide; it reads APLAAPAPAP…EIPASSNAKR (142 aa). An Inhibitor I9 domain is found at 68 to 146; the sequence is FIVVFDSSAT…TVEPDTIVSL (79 aa). An N-linked (GlcNAc...) asparagine glycan is attached at N123. In terms of domain architecture, Peptidase S8 spans 166-454; that stretch reads QWGLSRISHK…NAVAYNGVGI (289 aa). Residues D200, H231, and S397 each act as charge relay system in the active site.

The protein belongs to the peptidase S8 family. Post-translationally, the pro-region is removed through cleavage by XPR6 after Lys156-Arg157, which yields mature active XPR2. In terms of processing, the 10 consecutive -X-Ala- or -X-Pro- dipeptides located over 100 amino acids upstream of the N-terminal of mature XPR2 are subject to dipeptidyl aminopeptidase (DPAPase)-processing. DPAPase activity is not necessary for XPR6 cleavage and for secretion of mature active XPR2. N-glycosylated. Glycosylation within the pro-region has no effect on secretion and maturation at 18 degrees Celsius, but is required for secretion at 28 degrees Celsius.

The protein localises to the secreted. The catalysed reaction is Hydrolysis of proteins with broad specificity for peptide bonds, and a preference for a large uncharged residue in P1. Hydrolyzes peptide amides.. Its activity is regulated as follows. The protease activity is completely inhibited by the serine inhibitor PMSF but is not affected by thiol group inhibitors and in the presence of dithiothreitol. In the presence of high concentrations of o-phenanthroline the protease activity is only partially inhibited. The pro-region plays an inhibitory role and may provide a mechanism for preventing premature activation in the secretory pathway. Its function is as follows. Major secreted protein that belongs to the subtilisin family serine proteases. This is Alkaline extracellular protease from Yarrowia lipolytica (strain CLIB 122 / E 150) (Yeast).